The following is a 934-amino-acid chain: Translation initiation factor IF-2 (934 aa).

The disordered stretch occupies residues alanine 54 to alanine 323. Composition is skewed to low complexity over residues proline 80–proline 154, arginine 185–glycine 197, glycine 206–alanine 231, and arginine 238–proline 250. The segment covering glycine 260–proline 303 has biased composition (gly residues). Residues arginine 308–lysine 317 are compositionally biased toward basic residues. The tr-type G domain occupies glutamine 430 to aspartate 602. The G1 stretch occupies residues glycine 439–threonine 446. A GTP-binding site is contributed by glycine 439–threonine 446. The segment at glycine 464–histidine 468 is G2. Residues aspartate 489 to glycine 492 are G3. Residues aspartate 489 to histidine 493 and asparagine 543 to aspartate 546 each bind GTP. Positions asparagine 543–aspartate 546 are G4. The tract at residues serine 579–lysine 581 is G5.

Belongs to the TRAFAC class translation factor GTPase superfamily. Classic translation factor GTPase family. IF-2 subfamily.

The protein resides in the cytoplasm. One of the essential components for the initiation of protein synthesis. Protects formylmethionyl-tRNA from spontaneous hydrolysis and promotes its binding to the 30S ribosomal subunits. Also involved in the hydrolysis of GTP during the formation of the 70S ribosomal complex. This is Translation initiation factor IF-2 from Corynebacterium urealyticum (strain ATCC 43042 / DSM 7109).